The sequence spans 259 residues: Undecaprenyl-diphosphatase 3 (259 aa).

Transmembrane regions (helical) follow at residues 1–21, 39–59, 71–91, 99–119, 133–153, 174–194, 208–228, and 236–256; these read MNWLEAFILGIIQGLTEFLPI, AGLFLDTMLHIGTLLAVFIYY, FSKLMLLLIVGTIPAVVIGLL, ISKTGITIGWEFLVTGFFLYM, ITYKDAFIIGSFXAVAIFPAI, AYFSFLLSTPAIVGAIILQFV, SLIVGTLSAAFFGYIAVSWMI, and LKVFAYYVWGLGILILTLQFT.

It belongs to the UppP family.

The protein localises to the cell membrane. The catalysed reaction is di-trans,octa-cis-undecaprenyl diphosphate + H2O = di-trans,octa-cis-undecaprenyl phosphate + phosphate + H(+). In terms of biological role, catalyzes the dephosphorylation of undecaprenyl diphosphate (UPP). Confers resistance to bacitracin. This chain is Undecaprenyl-diphosphatase 3, found in Bacillus cereus (strain ATCC 10987 / NRS 248).